Consider the following 141-residue polypeptide: Large ribosomal subunit protein uL11 (141 aa).

Belongs to the universal ribosomal protein uL11 family. As to quaternary structure, part of the ribosomal stalk of the 50S ribosomal subunit. Interacts with L10 and the large rRNA to form the base of the stalk. L10 forms an elongated spine to which L12 dimers bind in a sequential fashion forming a multimeric L10(L12)X complex. Post-translationally, one or more lysine residues are methylated.

Forms part of the ribosomal stalk which helps the ribosome interact with GTP-bound translation factors. The polypeptide is Large ribosomal subunit protein uL11 (Methylacidiphilum infernorum (isolate V4) (Methylokorus infernorum (strain V4))).